A 180-amino-acid polypeptide reads, in one-letter code: NADH-ubiquinone oxidoreductase chain 5 (180 aa).

The chain crosses the membrane as a helical span at residues 131-148 (VYHYAFAMLLGSTPFVTF).

This sequence belongs to the complex I subunit 5 family.

The protein localises to the mitochondrion inner membrane. It catalyses the reaction a ubiquinone + NADH + 5 H(+)(in) = a ubiquinol + NAD(+) + 4 H(+)(out). Functionally, core subunit of the mitochondrial membrane respiratory chain NADH dehydrogenase (Complex I) that is believed to belong to the minimal assembly required for catalysis. Complex I functions in the transfer of electrons from NADH to the respiratory chain. The immediate electron acceptor for the enzyme is believed to be ubiquinone. This chain is NADH-ubiquinone oxidoreductase chain 5 (ND5), found in Zea mays (Maize).